Here is a 242-residue protein sequence, read N- to C-terminus: Coat protein (242 aa).

Over residues methionine 1–asparagine 16 the composition is skewed to pro residues. Disordered regions lie at residues methionine 1–glutamine 41 and serine 219–alanine 242. Residues serine 219–threonine 232 show a composition bias toward polar residues.

Belongs to the potexvirus capsid protein family.

The protein localises to the virion. In terms of biological role, required for genome encapsidation. Forms ribonucleoprotein complexes along with TGB1 helicase and viral RNA. The sequence is that of Coat protein from Strawberry mild yellow edge-associated virus (SMYEaV).